Here is a 1898-residue protein sequence, read N- to C-terminus: MAPEPAPGRRMVPLVPALVMLGLMAGAHGDSKPVFVKVPEDQIGLSGGVASFVCQATGEPKPRITWMKKGKKVSSQRFEVIEFDDGAGSVLRIQPLRVQRDEAIYECTATNSLGEINTSAKLSVLEEDQLPSGFPTIDMGPQLKVVEKARTATMLCAAGGNPDPEISWFKDFLPVDPASSNGRIKQLRSGALQIESSEESDQGKYECVATNSAGTRYSAPANLYVRVRRVAPRFSIPPSSQEVMPGGNVNLTCVAVGAPMPYVKWMMGAEELTKEDEMPVGRNVLELSNVMRSANYTCVAISSLGMIEATAQVTVKALPKPPIDLVVTETTATSVTLTWDSGNTEPVSFYGIQYRAAGTDGPFQEVDGVASTRYSIGGLSPFSEYAFRVLAVNSIGRGPPSEAVRARTGEQAPSSPPRRVQARMLSASTMLVQWEPPEEPNGLVRGYRVYYTPDSRRPLSAWHKHNTDAGLLTTVGSLLPGITYSLRVLAFTAVGDGPPSPTIQVKTQQGVPAQPADFQAKAESDTRIQLSWLLPPQERIIKYELVYWAAEDEGQQHKVTFDPTSSYTLEDLKPDTLYHFQLAARSDLGVGVFTPTVEACTAQSTPSAPPQKVTCVSTGSTTVRVSWVPPPADSRNGIITQYSVAYEAVDGEDRKRHVVDGISREHSSWDLLGLEKWTEYRVWVRAHTDVGPGPESSPVLVRTDEDVPSGPPRKVEVEPLNSTAVHVSWKLPVPNKQHGQIRGYQVTYVRLENGEPRGQPIIQDVMLAEAQETTISGLTPETTYSITVAAYTTKGDGARSKPKVVTTTGAVPGRPTMMVSTTAMHTALLQWHPPKELPGELLGYRLQYRRADEARPNTIDFGKDDQHFTVTGLHKGATYIFRLAAKNRAGPGEEFEKEITTPEDAPSGFPQNLRVTGLTTSTTELAWDPPVLAERNGRITNYTVVYRDINSQHELQNVTGDVHLTLLGLKPDTTYDIKVRAHTSKGAGPLSPSIQSRTMPMEQVFAKNFRVAAAMKTSVLLSWEVPDSYKSAVPFKILYNGQSVEVDGHSMRKLIADLQPNTEYSFVLMNRGTSAGGLQHLVSIRTAPDLLPQKPLPASAFIEDGRFSLSMPQVQDPSLVRWFYIVVVPIDRVGGNLLAPRWSTPEELELDELLEAIEQGEEKQRRRRRQAERLKPYVAAQVDELPETFTLGDKKNYRGFYNRPLSPDLSYQCFVLASLKEPMDQKRYASSPYSDEIVVQVTPAQQQEEPEMLWVTGPVLAVILIILIVIAILLFKRKRTHSPSSKDEQSIGLKDSLLAHSSDPVEMRRLNYQTPGMRDHPPIPITDLADNIERLKANDGLKFSQEYESIDPGQQFTWENSNSEVNKPKNRYANVIAYDHSRVLLTSIDGVPGSDYINANYIDGYRKQNAYIATQGPLPETMGDFWRMVWEQRIATVVMMTRLEEKSRVKCDQYWPARGTETYGLIQVTLVDTVELATYTMRTFALHKSGSSEKRELRQFQFMAWPDHGVPEYPTPILAFLRRVKACNPLDAGPMVVHCSAGVGRTGCFIVIDAMLERMKHEKTVDIYGHVTCMRSQRNYMVQTEDQYVFIHEALLEAAMCGHTEVLARNLYAHIQKLGQVPPGESVTAMELEFKLLAGSKARASRFISANLPCNKFKNRLVNIMPYELTRVCLQPIRGVEGSDYINASFLDGYRQQKAYIATQGPLAESTEDFWRMLWEHNSTIIVMLTKLREMGREKCHQYWPAERSARYQYFVVDPMAEYNMPQYILREFKVTDARDGQSRTIRQFQFTDWPEQGVPKTGEGFIDFIGQVHKTKEQFGQDGPITVHCSAGVGRTGVFITLSIVLERMRYEGVVDMFQTVKTLRTQRPAMVQTEDQYQLCYRAALEYLGSFDHYAT.

The first 29 residues, 1 to 29 (MAPEPAPGRRMVPLVPALVMLGLMAGAHG), serve as a signal peptide directing secretion. Residues 30-1254 (DSKPVFVKVP…QQQEEPEMLW (1225 aa)) are Extracellular-facing. Ig-like C2-type domains lie at 33 to 123 (PVFV…AKLS), 135 to 224 (PTID…ANLY), and 232 to 314 (PRFS…AQVT). A disulfide bond links Cys54 and Cys107. 68–77 (KKGKKVSSQR) serves as a coordination point for heparin. N-linked (GlcNAc...) asparagine glycosylation occurs at Asn117. Cys156 and Cys207 are oxidised to a cystine. Residues Asn250 and Asn295 are each glycosylated (N-linked (GlcNAc...) asparagine). A disulfide bridge links Cys253 with Cys298. Fibronectin type-III domains lie at 321–411 (PPID…TGEQ), 416–510 (PPRR…TQQG), 514–604 (QPAD…TAQS), 609–706 (PPQK…TDED), 711–810 (PPRK…TTGA), 811–905 (VPGR…PEDA), 909–1001 (FPQN…TMPM), and 1005–1089 (FAKN…TAPD). The interval 693–713 (GPESSPVLVRTDEDVPSGPPR) is disordered. Asn721 is a glycosylation site (N-linked (GlcNAc...) asparagine). Residues Asn941 and Asn957 are each glycosylated (N-linked (GlcNAc...) asparagine). The helical transmembrane segment at 1255–1275 (VTGPVLAVILIILIVIAILLF) threads the bilayer. At 1276-1898 (KRKRTHSPSS…YLGSFDHYAT (623 aa)) the chain is on the cytoplasmic side. The residue at position 1296 (Ser1296) is a Phosphoserine. 2 consecutive Tyrosine-protein phosphatase domains span residues 1343–1598 (FSQE…LLEA) and 1630–1889 (MELE…ALEY). Substrate is bound by residues Asp1507, 1539 to 1545 (CSAGVGR), and Gln1583. Cys1539 acts as the Phosphocysteine intermediate in catalysis. Catalysis depends on Cys1830, which acts as the Phosphocysteine intermediate.

The protein belongs to the protein-tyrosine phosphatase family. Receptor class 2A subfamily. In terms of assembly, interacts with GRIP1. Interacts with PPFIA1, PPFIA2 and PPFIA3. Interacts with PTPRF.

The protein resides in the membrane. The enzyme catalyses O-phospho-L-tyrosyl-[protein] + H2O = L-tyrosyl-[protein] + phosphate. Functionally, possible cell adhesion receptor. It possesses an intrinsic protein tyrosine phosphatase activity (PTPase) and dephosphorylates EPHA2 regulating its activity. The first PTPase domain has enzymatic activity, while the second one seems to affect the substrate specificity of the first one. This is Receptor-type tyrosine-protein phosphatase F (Ptprf) from Rattus norvegicus (Rat).